We begin with the raw amino-acid sequence, 335 residues long: Beta-hexosaminidase (335 aa).

Substrate is bound by residues Asp-60, Arg-68, Arg-133, and 163 to 164 (KH). The active-site Proton donor/acceptor is His-176. The active-site Nucleophile is Asp-247.

It belongs to the glycosyl hydrolase 3 family. NagZ subfamily.

Its subcellular location is the cytoplasm. The enzyme catalyses Hydrolysis of terminal non-reducing N-acetyl-D-hexosamine residues in N-acetyl-beta-D-hexosaminides.. It functions in the pathway cell wall biogenesis; peptidoglycan recycling. Its function is as follows. Plays a role in peptidoglycan recycling by cleaving the terminal beta-1,4-linked N-acetylglucosamine (GlcNAc) from peptide-linked peptidoglycan fragments, giving rise to free GlcNAc, anhydro-N-acetylmuramic acid and anhydro-N-acetylmuramic acid-linked peptides. In Xylella fastidiosa (strain M23), this protein is Beta-hexosaminidase.